A 273-amino-acid chain; its full sequence is Large ribosomal subunit protein uL2 (273 aa).

2 disordered regions span residues 28–53 and 221–273; these read KPFA…TTRH and RGTA…RRSK. Residues 39–48 show a composition bias toward low complexity; sequence KSGGRNNNGR. At Lys-242 the chain carries N6-acetyllysine.

It belongs to the universal ribosomal protein uL2 family. Part of the 50S ribosomal subunit. Forms a bridge to the 30S subunit in the 70S ribosome.

One of the primary rRNA binding proteins. Required for association of the 30S and 50S subunits to form the 70S ribosome, for tRNA binding and peptide bond formation. It has been suggested to have peptidyltransferase activity; this is somewhat controversial. Makes several contacts with the 16S rRNA in the 70S ribosome. The chain is Large ribosomal subunit protein uL2 from Escherichia coli (strain SE11).